A 311-amino-acid chain; its full sequence is DNA repair and recombination protein RadA (311 aa).

Residue 104-111 (GEFGSGKS) coordinates ATP.

It belongs to the eukaryotic RecA-like protein family.

In terms of biological role, involved in DNA repair and in homologous recombination. Binds and assemble on single-stranded DNA to form a nucleoprotein filament. Hydrolyzes ATP in a ssDNA-dependent manner and promotes DNA strand exchange between homologous DNA molecules. The protein is DNA repair and recombination protein RadA of Methanobrevibacter smithii (strain ATCC 35061 / DSM 861 / OCM 144 / PS).